The primary structure comprises 139 residues: Small ribosomal subunit protein uS12m (139 aa).

The N-terminal 29 residues, methionine 1–serine 29, are a transit peptide targeting the mitochondrion. The tract at residues methionine 36–arginine 56 is disordered.

The protein belongs to the universal ribosomal protein uS12 family. Component of the mitochondrial ribosome small subunit (28S) which comprises a 12S rRNA and about 30 distinct proteins.

The protein localises to the mitochondrion. The chain is Small ribosomal subunit protein uS12m (MRPS12) from Pongo abelii (Sumatran orangutan).